A 203-amino-acid chain; its full sequence is SCO2-like protein RT0576 (203 aa).

In terms of domain architecture, Thioredoxin spans 42–203; that stretch reads KDNIKIGEAF…KEIMEFLRNE (162 aa). Residues Cys80, Cys84, and His170 each contribute to the Cu cation site.

The protein belongs to the SCO1/2 family.

In Rickettsia typhi (strain ATCC VR-144 / Wilmington), this protein is SCO2-like protein RT0576.